The chain runs to 423 residues: Deferrochelatase (423 aa).

The tat-type signal signal peptide spans 1 to 35 (MQYKDENGVNEPSRRRLLKVIGALALAGSCPVAHA). Heme b is bound at residue 236–238 (GTA). Protoporphyrin IX is bound by residues 236-238 (GTA) and R296. Heme b contacts are provided by residues H329, 334–336 (NPR), and R347.

As to quaternary structure, homodimer. Part of a ferrous iron transporter composed of EfeU, EfeO and EfeB. However, this EfeUOB tripartite iron transporter is defective in E.coli strain K12 due to a frameshift mutation in EfeU. Heme b serves as cofactor. Post-translationally, exported by the Tat system. The position of the signal peptide cleavage has been experimentally proven. Can also be exported by the Sec system.

The protein localises to the periplasm. It carries out the reaction heme b + 2 H(+) = protoporphyrin IX + Fe(2+). Its function is as follows. Involved in the recovery of exogenous heme iron. Extracts iron from heme while preserving the protoporphyrin ring intact. Also displays peroxidase activity on guaiacol in vitro. In Escherichia coli (strain K12), this protein is Deferrochelatase (efeB).